The primary structure comprises 318 residues: Peptidyl-prolyl cis-trans isomerase CPR4 (318 aa).

The first 20 residues, 1–20 (MWLKSLLLCLYSLVLCQVHA), serve as a signal peptide directing secretion. The PPIase cyclophilin-type domain occupies 55–225 (YFDPVSKSMK…HELRFLYFVL (171 aa)). The N-linked (GlcNAc...) asparagine glycan is linked to Asn166. The helical transmembrane segment at 286–303 (ISRALMCLTVLGLCFIAY) threads the bilayer.

It localises to the membrane. The catalysed reaction is [protein]-peptidylproline (omega=180) = [protein]-peptidylproline (omega=0). Its function is as follows. PPIases accelerate the folding of proteins. It catalyzes the cis-trans isomerization of proline imidic peptide bonds in oligopeptides. The polypeptide is Peptidyl-prolyl cis-trans isomerase CPR4 (CPR4) (Saccharomyces cerevisiae (strain ATCC 204508 / S288c) (Baker's yeast)).